Reading from the N-terminus, the 429-residue chain is Zinc finger protein 275 (429 aa).

Residues 31–95 (VSDPSPNTDP…DGKRGSPQNL (65 aa)) are disordered. The segment covering 34–51 (PSPNTDPAKYSESTSATR) has biased composition (polar residues). The residue at position 76 (Ser76) is a Phosphoserine. The span at 79–89 (FRQHGDSDGKR) shows a compositional bias: basic and acidic residues. 2 C2H2-type zinc fingers span residues 101–123 (FACKECGDTFRLKVLLVQHQRVH) and 129–151 (WECGDCGKVFRGVAEFNEHRKSH). The tract at residues 149–176 (KSHVAAEPQPGPSRALENAAEKREQMER) is disordered. Positions 167 to 176 (AAEKREQMER) are enriched in basic and acidic residues. 9 C2H2-type zinc fingers span residues 181-203 (FECEECGKRFKKNAGLSQHLRVH), 209-231 (FDCEECGRSFKVNTHLFRHQKLH), 237-259 (FACKACSRDFLDRQELLKHQRMH), 265-287 (FDCDDCGKSFRGVNGLAEHQRIH), 293-315 (YGCPHCGKLFRRSSELTKHRRIH), 321-343 (YACGQCGKAFRQSSSLLEHARIH), 349-371 (YACGECGKAFRGPSDLIKHRRIH), 377-399 (YECDKCGKAFRRSSGLSRHRRIH), and 405-427 (CECSQCGRVFKRRSALQKHQPTH).

Belongs to the krueppel C2H2-type zinc-finger protein family.

It localises to the nucleus. In terms of biological role, may be involved in transcriptional regulation. This is Zinc finger protein 275 (ZNF275) from Homo sapiens (Human).